Consider the following 1605-residue polypeptide: Ribosome-binding protein 1 (1605 aa).

Over 1-7 (MDIYDTQ) the chain is Lumenal. Residues 8–28 (TLGVVVFGGFMVVSAIGIFLV) traverse the membrane as a helical segment. The Cytoplasmic segment spans residues 29–1605 (STFSMKETSY…GSSSKEGTSV (1577 aa)). The disordered stretch occupies residues 44–88 (NQRKEMAKTHHQKGEKKKKEKTVEKKGKTKKKEEKPNGKIPEHDL). Over residues 52–63 (THHQKGEKKKKE) the composition is skewed to basic residues. The span at 64–88 (KTVEKKGKTKKKEEKPNGKIPEHDL) shows a compositional bias: basic and acidic residues. S111 carries the phosphoserine modification. Residues 114 to 150 (SSVGHTPIATVPAMPQEKLASSPKDRKKKEKKVAKVE) are disordered. Residue K148 forms a Glycyl lysine isopeptide (Lys-Gly) (interchain with G-Cter in SUMO2) linkage. Phosphoserine occurs at positions 159 and 165. The disordered stretch occupies residues 172–849 (ATPKEVPMVA…PGPPDCDGPL (678 aa)). Repeat copies occupy residues 196–205 (SQGKKGQGAQ), 206–215 (NQAKKGEGAQ), 216–225 (NQGKKGEGAQ), 226–235 (NQAKKGEGAQ), 236–245 (NQAKKGEGAQ), 246–255 (NQGKKGEGAQ), 256–265 (NQAKKGEGGQ), 266–275 (NQAKKGEGAQ), 276–285 (NQGKKGEGAQ), 286–295 (NQGKKGEGAQ), 296–305 (NQAKKGEGAQ), 306–315 (NQAKKGEGAQ), 316–325 (NQGKKGEGAQ), 326–335 (NQSKKGEGAQ), 336–345 (NQAKKGEGGQ), 346–355 (NQAKKGEGAQ), 356–365 (NQAKKGEGAQ), 366–375 (NQAKKGEGVQ), 376–385 (NQAKKGVEGA), 386–395 (QNQGKKGEAN), 396–405 (QNQAKKGEGG), 406–415 (QNQTKKGEGP), 416–425 (QNQGKKGEAA), 426–435 (QKQDKKIEGA), 436–445 (QNQGKKPEGT), 446–455 (SNQGKKGEGA), 456–465 (QNQGKKGEGA), 466–475 (QNQSKKGEGA), 476–485 (QNQAKKGEGG), 486–495 (QNQAKKGEGA), 496–505 (QNQAKKGEGA), 506–515 (QNQAKKGEGV), 516–525 (QNQAKKGVEG), 527–536 (QNQGKKGEAN), 537–546 (QNQAKKGEGG), 547–556 (QNQTKKGEGP), 557–566 (QNQGKKGEAA), 567–576 (QKQDKKIEGA), 577–586 (QNQGKKPEGT), 587–596 (SNQGKKGEGA), 597–606 (QNQGKKGEGA), 607–616 (QNQGKKGEGA), 617–626 (QNQGKKGEGA), 628–637 (NQGKKGEGAQ), 638–647 (NQGKKGEGAQ), 648–657 (NQGKKGEGAQ), 658–667 (NQGKKGEGPQ), 668–677 (NQAKKGEGAQ), 678–687 (NQGKKGEGAQ), 688–697 (NQGKKGEGAQ), 698–707 (NQGKKAEGVQ), 708–717 (SQSKKGEGTQ), 718–727 (NQGKKGDGNP), 729–738 (QGKKGEGASN), 739–748 (QNRKTDTVAN), 749–758 (QGTKQEGVSN), 759–768 (QVKKSEGSPN), 769–778 (QGKKAEGAPN), 779–788 (QGKKKDGSPS), 789–798 (QAKKVDAAAN), and 799–808 (QGKKSEMAPA). The tract at residues 196 to 808 (SQGKKGQGAQ…QGKKSEMAPA (613 aa)) is 61 X 10 AA tandem repeats of [NSQ]-[NKQVGA]-[GSAQKRT]-[ASGDTK]-[KGTQSAV]-[KGAED]-[EQVGIPTDMA]-[EGVAS]-[AGVPETNS]-[AQNGPTVS]. Positions 197–208 (QGKKGQGAQNQA) are enriched in low complexity. Polar residues-rich tracts occupy residues 224–258 (AQNQAKKGEGAQNQAKKGEGAQNQGKKGEGAQNQA), 274–338 (AQNQ…QNQA), 354–378 (AQNQAKKGEGAQNQAKKGEGVQNQA), and 385–399 (AQNQGKKGEANQNQA). Basic and acidic residues predominate over residues 420 to 433 (KKGEAAQKQDKKIE). 3 stretches are compositionally biased toward polar residues: residues 435–479 (AQNQ…QNQA), 495–519 (AQNQAKKGEGAQNQAKKGEGVQNQA), and 526–540 (AQNQGKKGEANQNQA). Residues 561-574 (KKGEAAQKQDKKIE) show a composition bias toward basic and acidic residues. Polar residues-rich tracts occupy residues 576-720 (AQNQ…QNQG) and 736-769 (ASNQNRKTDTVANQGTKQEGVSNQVKKSEGSPNQ). S786 bears the Phosphoserine mark. The span at 811–821 (QKASMVQSQEA) shows a compositional bias: polar residues. S818 is subject to Phosphoserine. K823 is covalently cross-linked (Glycyl lysine isopeptide (Lys-Gly) (interchain with G-Cter in SUMO1)). K1135 is subject to N6-acetyllysine. Phosphoserine occurs at positions 1162 and 1178. Disordered stretches follow at residues 1460–1481 (MRSHVEDGDVAGSPAVPPAEQD) and 1571–1605 (TTQEQLTKEKDTVKKLQEQLGKAEDGSSSKEGTSV). A compositionally biased stretch (basic and acidic residues) spans 1576-1598 (LTKEKDTVKKLQEQLGKAEDGSS).

As to expression, widely expressed.

It is found in the endoplasmic reticulum membrane. In terms of biological role, acts as a ribosome receptor and mediates interaction between the ribosome and the endoplasmic reticulum membrane. The polypeptide is Ribosome-binding protein 1 (Rrbp1) (Mus musculus (Mouse)).